The sequence spans 718 residues: Catalase-peroxidase (718 aa).

Positions 98–219 (WHAAGTYRMG…LAATEMGLIY (122 aa)) form a cross-link, tryptophyl-tyrosyl-methioninium (Trp-Tyr) (with M-245). Residue His-99 is the Proton acceptor of the active site. Positions 219–245 (YVNPEGPQASGDPRSAAPFIRATFGNM) form a cross-link, tryptophyl-tyrosyl-methioninium (Tyr-Met) (with W-98). His-260 serves as a coordination point for heme b.

This sequence belongs to the peroxidase family. Peroxidase/catalase subfamily. In terms of assembly, homodimer or homotetramer. Heme b serves as cofactor. In terms of processing, formation of the three residue Trp-Tyr-Met cross-link is important for the catalase, but not the peroxidase activity of the enzyme.

The enzyme catalyses H2O2 + AH2 = A + 2 H2O. It carries out the reaction 2 H2O2 = O2 + 2 H2O. Functionally, bifunctional enzyme with both catalase and broad-spectrum peroxidase activity. The chain is Catalase-peroxidase from Acinetobacter baumannii (strain ATCC 17978 / DSM 105126 / CIP 53.77 / LMG 1025 / NCDC KC755 / 5377).